We begin with the raw amino-acid sequence, 425 residues long: MQITVVGAGIVGISTAYALAQEGHQVTLVERNPGPGEGTSYANGGQLSYSYVAPLAGPGVLSHVPGWLLRRDSPLRLKPSLDPVLLRWGLRFIAACNRERADRTTRELLALSFYSRARMEALRAASPDLSFSFARRGKLVVYRDAAAFASARAQVGYQATLGCEQHALSADETIAREPALAGARGAIVGAIYTPDEDVADCHQLCVGLFNRLCALPNVALRFNAGAESLWVEGRRVRGVRTAHEPITADAVVVAAGVASAGLLGPLRIDPGLYPLKGYSISLPLGEGGAGSDGAPVVSVTDAARKIVYARIGRTLRVAGMADLVGWSDRLDPRRVQTLYDETRALFPAALRASDAGADAAPWAGMRPATPTGVPVVGPSPVDGLWLNVGHGALGFTLAMGSAGLLADLIARRAPAIAAAPYALAR.

Residue 3 to 17 coordinates FAD; that stretch reads ITVVGAGIVGISTAY.

Belongs to the DadA oxidoreductase family. It depends on FAD as a cofactor.

The enzyme catalyses a D-alpha-amino acid + A + H2O = a 2-oxocarboxylate + AH2 + NH4(+). Functionally, oxidative deamination of D-amino acids. The polypeptide is D-amino acid dehydrogenase 2 (dadA2) (Ralstonia nicotianae (strain ATCC BAA-1114 / GMI1000) (Ralstonia solanacearum)).